The following is a 525-amino-acid chain: Bestrophin homolog 15 (525 aa).

A run of 4 helical transmembrane segments spans residues 36 to 56 (LFMF…NLII), 71 to 91 (FDQN…VTII), 237 to 257 (LAYP…ALIA), and 273 to 293 (ILYP…VVGW).

This sequence belongs to the anion channel-forming bestrophin (TC 1.A.46) family. Calcium-sensitive chloride channel subfamily. Forms oligomers.

Its subcellular location is the cell membrane. Functionally, forms chloride channels. The protein is Bestrophin homolog 15 (best-15) of Caenorhabditis elegans.